The chain runs to 449 residues: Adenylosuccinate synthetase (449 aa).

Residues G37–K43 and G65–T67 contribute to the GTP site. D38 serves as the catalytic Proton acceptor. 2 residues coordinate Mg(2+): D38 and G65. Residues D38 to K41, N63 to H66, T155, R169, N247, T262, and R326 contribute to the IMP site. H66 serves as the catalytic Proton donor. V322 to R328 contacts substrate. GTP is bound by residues R328, K354–D356, and G437–G439.

The protein belongs to the adenylosuccinate synthetase family. As to quaternary structure, homodimer. The cofactor is Mg(2+).

The protein resides in the cytoplasm. It carries out the reaction IMP + L-aspartate + GTP = N(6)-(1,2-dicarboxyethyl)-AMP + GDP + phosphate + 2 H(+). The protein operates within purine metabolism; AMP biosynthesis via de novo pathway; AMP from IMP: step 1/2. Plays an important role in the de novo pathway and in the salvage pathway of purine nucleotide biosynthesis. Catalyzes the first committed step in the biosynthesis of AMP from IMP. This chain is Adenylosuccinate synthetase, found in Drosophila willistoni (Fruit fly).